Reading from the N-terminus, the 78-residue chain is Large ribosomal subunit protein bL28 (78 aa).

The protein belongs to the bacterial ribosomal protein bL28 family.

This chain is Large ribosomal subunit protein bL28, found in Corynebacterium aurimucosum (strain ATCC 700975 / DSM 44827 / CIP 107346 / CN-1) (Corynebacterium nigricans).